The primary structure comprises 515 residues: Histidine ammonia-lyase (515 aa).

A cross-link (5-imidazolinone (Ala-Gly)) is located at residues 145–147 (ASG). S146 carries the post-translational modification 2,3-didehydroalanine (Ser).

This sequence belongs to the PAL/histidase family. In terms of processing, contains an active site 4-methylidene-imidazol-5-one (MIO), which is formed autocatalytically by cyclization and dehydration of residues Ala-Ser-Gly.

The protein localises to the cytoplasm. The catalysed reaction is L-histidine = trans-urocanate + NH4(+). Its pathway is amino-acid degradation; L-histidine degradation into L-glutamate; N-formimidoyl-L-glutamate from L-histidine: step 1/3. This Gluconacetobacter diazotrophicus (strain ATCC 49037 / DSM 5601 / CCUG 37298 / CIP 103539 / LMG 7603 / PAl5) protein is Histidine ammonia-lyase.